Reading from the N-terminus, the 316-residue chain is Ferrochelatase (316 aa).

Positions 186 and 268 each coordinate Fe cation.

This sequence belongs to the ferrochelatase family.

The protein localises to the cytoplasm. The catalysed reaction is heme b + 2 H(+) = protoporphyrin IX + Fe(2+). It functions in the pathway porphyrin-containing compound metabolism; protoheme biosynthesis; protoheme from protoporphyrin-IX: step 1/1. Functionally, catalyzes the ferrous insertion into protoporphyrin IX. The sequence is that of Ferrochelatase from Deinococcus radiodurans (strain ATCC 13939 / DSM 20539 / JCM 16871 / CCUG 27074 / LMG 4051 / NBRC 15346 / NCIMB 9279 / VKM B-1422 / R1).